The primary structure comprises 192 residues: MKDELFLRGENVPMTKEAVRALALSKLELHRASHLIDVGAGTGSVSIEAALQFPSLQVTAIERNPAALRLLDENRQRFACGNIDILPGEAPMTITGKADAVFMGGSGGHLTALIDWAMGHLHPGGRLVMTFILQENLHSALAHLVHIGACRMDCVQLQLSSLTPLGAGHYFKPNNPVFVIACQKEENHVRDI.

S-adenosyl-L-methionine is bound by residues T15, G39 to G43, E62, and A90.

This sequence belongs to the methyltransferase superfamily. Bacterial-type CbiT family.

The catalysed reaction is Co-precorrin-6B + S-adenosyl-L-methionine = Co-precorrin-7 + S-adenosyl-L-homocysteine + CO2. It functions in the pathway cofactor biosynthesis; adenosylcobalamin biosynthesis; cob(II)yrinate a,c-diamide from sirohydrochlorin (anaerobic route): step 8/10. Functionally, catalyzes the methylation of C-15 in cobalt-precorrin-6B followed by the decarboxylation of C-12 to form cobalt-precorrin-7. The sequence is that of Cobalt-precorrin-6B C(15)-methyltransferase (decarboxylating) (cbiT) from Salmonella typhi.